We begin with the raw amino-acid sequence, 302 residues long: Deoxyhypusine hydroxylase (302 aa).

HEAT-like PBS-type repeat units follow at residues 23 to 49, 54 to 80, 87 to 113, 175 to 201, 206 to 232, and 239 to 265; these read ERFRALFTLKNIGGGAAIEAISKAFDD, LKHELAYCLGQMQDAQALDILTKVLKD, VRHEAAEAMGAIGHPDVLPILEEYKQD, DRYRAMFSLRNLRTEESVLAIAEGLKD, FRHEVAFVLGQLQEPCSIPFLQENLED, and VRHECAEALGAIATEDCIQILNRYAED. Residues H56, E57, H89, and E90 each coordinate Fe cation. Fe cation contacts are provided by H208, E209, H241, and E242.

Belongs to the deoxyhypusine hydroxylase family. Fe(2+) serves as cofactor.

It is found in the endoplasmic reticulum membrane. It carries out the reaction [eIF5A protein]-deoxyhypusine + AH2 + O2 = [eIF5A protein]-hypusine + A + H2O. Its pathway is protein modification; eIF5A hypusination. In terms of biological role, catalyzes the hydroxylation of the N(6)-(4-aminobutyl)-L-lysine intermediate to form hypusine, an essential post-translational modification only found in mature eIF-5A factor. Essential for organismal viability and plays a role in a wide number of important processes such as cell growth and proliferation, and regulates induction of autophagy and protein synthesis. Has a role in eIF-5A-mediated translational control. The polypeptide is Deoxyhypusine hydroxylase (Drosophila melanogaster (Fruit fly)).